A 295-amino-acid polypeptide reads, in one-letter code: Movement protein BC1 (295 aa).

Belongs to the begomovirus movement protein BC1 family. Binds to dimeric supercoiled plasmid DNA. In terms of processing, phosphorylated.

The protein localises to the host cell membrane. It localises to the host microsome membrane. The protein resides in the host endoplasmic reticulum membrane. Functionally, transports viral genome to neighboring plant cells directly through plasmosdesmata, without any budding. The movement protein allows efficient cell to cell propagation, by bypassing the host cell wall barrier. Begomovirus genome is shuttled out of nucleus by Nuclear shuttle protein (NSP) and the movement protein transports the DNA-NSP complex to cell plasmodesmata and facilitates further movement across the cell wall. This is Movement protein BC1 from Brassica oleracea (Wild cabbage).